Reading from the N-terminus, the 271-residue chain is Acetyl-coenzyme A carboxylase carboxyl transferase subunit alpha (271 aa).

The 247-residue stretch at 1–247 folds into the CoA carboxyltransferase C-terminal domain; sequence MSRELIRTAD…KKTILEALGE (247 aa).

This sequence belongs to the AccA family. In terms of assembly, acetyl-CoA carboxylase is a heterohexamer composed of biotin carboxyl carrier protein (AccB), biotin carboxylase (AccC) and two subunits each of ACCase subunit alpha (AccA) and ACCase subunit beta (AccD).

The protein resides in the cytoplasm. The catalysed reaction is N(6)-carboxybiotinyl-L-lysyl-[protein] + acetyl-CoA = N(6)-biotinyl-L-lysyl-[protein] + malonyl-CoA. It functions in the pathway lipid metabolism; malonyl-CoA biosynthesis; malonyl-CoA from acetyl-CoA: step 1/1. In terms of biological role, component of the acetyl coenzyme A carboxylase (ACC) complex. First, biotin carboxylase catalyzes the carboxylation of biotin on its carrier protein (BCCP) and then the CO(2) group is transferred by the carboxyltransferase to acetyl-CoA to form malonyl-CoA. The sequence is that of Acetyl-coenzyme A carboxylase carboxyl transferase subunit alpha from Clostridium perfringens (strain 13 / Type A).